Consider the following 728-residue polypeptide: Catalase-peroxidase (728 aa).

The disordered stretch occupies residues 1 to 26 (MDNPTDTAGKCPVAHGNKPRGPSNRD). The segment at residues 96–218 (WHSAGTYRIT…LGAVQMGLIY (123 aa)) is a cross-link (tryptophyl-tyrosyl-methioninium (Trp-Tyr) (with M-244)). Histidine 97 serves as the catalytic Proton acceptor. The segment at residues 218–244 (YVNPEGPGGNPDPLASARDIRETFARM) is a cross-link (tryptophyl-tyrosyl-methioninium (Tyr-Met) (with W-96)). Histidine 259 contributes to the heme b binding site.

The protein belongs to the peroxidase family. Peroxidase/catalase subfamily. As to quaternary structure, homodimer or homotetramer. It depends on heme b as a cofactor. Formation of the three residue Trp-Tyr-Met cross-link is important for the catalase, but not the peroxidase activity of the enzyme.

The enzyme catalyses H2O2 + AH2 = A + 2 H2O. It carries out the reaction 2 H2O2 = O2 + 2 H2O. Bifunctional enzyme with both catalase and broad-spectrum peroxidase activity. The protein is Catalase-peroxidase of Rhizobium etli (strain CIAT 652).